The chain runs to 435 residues: F-box/FBD/LRR-repeat protein At1g51370 (435 aa).

The region spanning 18–64 is the F-box domain; it reads EDRISQLPEPLISEILFHLSTKDSVRTSALSTKWRYLWQSVPGLDLD. 5 LRR repeats span residues 123-148, 170-195, 234-259, 262-287, and 314-340; these read VHCF…RLRW, VSYP…ILFS, AKMY…DFVN, GRYQ…VISS, and RFYI…ILEM. Residues 354–406 form the FBD domain; it reads EPNVMVSTVPWCLVSSLKFVELKRSIPRYEGEMELVRYVLTNSTVLKKLRLNV.

This Arabidopsis thaliana (Mouse-ear cress) protein is F-box/FBD/LRR-repeat protein At1g51370.